A 155-amino-acid chain; its full sequence is Protein SREK1IP1 (155 aa).

The segment at 13 to 30 (AGCKKCGYPGHLTFECRN) adopts a CCHC-type zinc-finger fold. The disordered stretch occupies residues 44 to 155 (VSSTSSEDSD…TPNSSEFSRK (112 aa)). Residue Ser-52 is modified to Phosphoserine. Residues 66–84 (QEKRINEEEEKKKEKSKEK) show a composition bias toward basic and acidic residues. Over residues 85-94 (IKLKKKRKRS) the composition is skewed to basic residues. Ser-96 and Ser-97 each carry phosphoserine. The segment covering 107 to 142 (QKKQKYQKKEKKKEKKSKSKKGKHHKKEKKKRKKEK) has biased composition (basic residues). At Thr-146 the chain carries Phosphothreonine. Residues 146-155 (TPNSSEFSRK) show a composition bias toward polar residues.

In terms of assembly, interacts with SREK1/SFRS12.

Its function is as follows. Possible splicing regulator involved in the control of cellular survival. This chain is Protein SREK1IP1 (SREK1IP1), found in Homo sapiens (Human).